Consider the following 104-residue polypeptide: uncharacterized protein (104 aa).

Residues 1 to 18 form the signal peptide; sequence MGVEGMWNVFLFSLQVAA. N-linked (GlcNAc...) asparagine; by host glycosylation occurs at Asn-27.

This is an uncharacterized protein from Fowl adenovirus A serotype 1 (strain CELO / Phelps) (FAdV-1).